The primary structure comprises 1030 residues: Subtilin biosynthesis protein SpaB (1030 aa).

It to S.epidermidis EpiB and L.lactis NisB.

The protein resides in the cell membrane. Involved in the post-translational modification of the lantibiotic subtilin. The polypeptide is Subtilin biosynthesis protein SpaB (spaB) (Bacillus subtilis).